The primary structure comprises 410 residues: Arginine biosynthesis bifunctional protein ArgJ (410 aa).

6 residues coordinate substrate: Thr-160, Lys-186, Thr-197, Glu-283, Asn-405, and Thr-410. Thr-197 (nucleophile) is an active-site residue.

This sequence belongs to the ArgJ family. Heterotetramer of two alpha and two beta chains.

The protein localises to the cytoplasm. It carries out the reaction N(2)-acetyl-L-ornithine + L-glutamate = N-acetyl-L-glutamate + L-ornithine. The catalysed reaction is L-glutamate + acetyl-CoA = N-acetyl-L-glutamate + CoA + H(+). The protein operates within amino-acid biosynthesis; L-arginine biosynthesis; L-ornithine and N-acetyl-L-glutamate from L-glutamate and N(2)-acetyl-L-ornithine (cyclic): step 1/1. It participates in amino-acid biosynthesis; L-arginine biosynthesis; N(2)-acetyl-L-ornithine from L-glutamate: step 1/4. With respect to regulation, competitively inhibited by L-ornithine. Its function is as follows. Catalyzes two activities which are involved in the cyclic version of arginine biosynthesis: the synthesis of N-acetylglutamate from glutamate and acetyl-CoA as the acetyl donor, and of ornithine by transacetylation between N(2)-acetylornithine and glutamate. The chain is Arginine biosynthesis bifunctional protein ArgJ from Geobacillus stearothermophilus (Bacillus stearothermophilus).